A 287-amino-acid chain; its full sequence is uncharacterized protein (287 aa).

Disordered stretches follow at residues 109 to 175 (QEES…SSQD), 203 to 223 (IPPP…SQPV), and 257 to 287 (KESE…SSEE). Residues 110-136 (EESSSSLEEGIIEDPVVATPSPASAAP) are compositionally biased toward low complexity. The segment covering 143 to 152 (RKEFKNEKWK) has biased composition (basic and acidic residues). Positions 153–162 (EKKKQGRRRN) are enriched in basic residues. A compositionally biased stretch (basic and acidic residues) spans 273 to 287 (SLEEASVHDRISSEE).

It belongs to the chlamydial CPn_0623/CT_504/TC_0791 family.

This is an uncharacterized protein from Chlamydia muridarum (strain MoPn / Nigg).